A 125-amino-acid chain; its full sequence is MRIAGVNLPLNKHAVIALTHVYGIGRTSAENILQRAGIAPERKISELNDEEAHAIREIIAEDYKVEGQARGEQQTAIKRLMDIGCYRGLRHRRSLPVRGQRTQTNARTRKGKRKTVAGKKKATKK.

Positions 92 to 125 (RRSLPVRGQRTQTNARTRKGKRKTVAGKKKATKK) are disordered. Positions 107–125 (RTRKGKRKTVAGKKKATKK) are enriched in basic residues.

It belongs to the universal ribosomal protein uS13 family. As to quaternary structure, part of the 30S ribosomal subunit. Forms a loose heterodimer with protein S19. Forms two bridges to the 50S subunit in the 70S ribosome.

Functionally, located at the top of the head of the 30S subunit, it contacts several helices of the 16S rRNA. In the 70S ribosome it contacts the 23S rRNA (bridge B1a) and protein L5 of the 50S subunit (bridge B1b), connecting the 2 subunits; these bridges are implicated in subunit movement. Contacts the tRNAs in the A and P-sites. This Chlorobium limicola (strain DSM 245 / NBRC 103803 / 6330) protein is Small ribosomal subunit protein uS13.